Consider the following 157-residue polypeptide: Transcription antitermination protein NusB (157 aa).

The protein belongs to the NusB family.

In terms of biological role, involved in transcription antitermination. Required for transcription of ribosomal RNA (rRNA) genes. Binds specifically to the boxA antiterminator sequence of the ribosomal RNA (rrn) operons. This chain is Transcription antitermination protein NusB, found in Helicobacter hepaticus (strain ATCC 51449 / 3B1).